Here is a 352-residue protein sequence, read N- to C-terminus: uncharacterized protein (352 aa).

The transit peptide at 1–55 (MAMAALTSSSSAITLLNKPFLPNRSSFFSSDSQSPLLRFSASTSVRSRFPSAAIS) directs the protein to the chloroplast.

It belongs to the methyltransferase superfamily.

The protein localises to the plastid. It is found in the chloroplast. Its subcellular location is the plastoglobule. This is an uncharacterized protein from Arabidopsis thaliana (Mouse-ear cress).